The chain runs to 75 residues: Protein Tlp homolog (75 aa).

A disordered region spans residues Arg53–Met75.

Belongs to the Tlp family.

In Clostridium botulinum (strain Langeland / NCTC 10281 / Type F), this protein is Protein Tlp homolog.